Consider the following 140-residue polypeptide: ATP synthase epsilon chain (140 aa).

It belongs to the ATPase epsilon chain family. In terms of assembly, F-type ATPases have 2 components, CF(1) - the catalytic core - and CF(0) - the membrane proton channel. CF(1) has five subunits: alpha(3), beta(3), gamma(1), delta(1), epsilon(1). CF(0) has three main subunits: a, b and c.

Its subcellular location is the cell inner membrane. In terms of biological role, produces ATP from ADP in the presence of a proton gradient across the membrane. This Neisseria meningitidis serogroup C (strain 053442) protein is ATP synthase epsilon chain.